The chain runs to 161 residues: RNA pyrophosphohydrolase (161 aa).

The Nudix hydrolase domain occupies 9-155; it reads PYRPCVGVML…KRRVYRQVVD (147 aa). The short motif at 44–65 is the Nudix box element; that stretch reads GGIDDGEELHPAALRELSEETG.

The protein belongs to the Nudix hydrolase family. RppH subfamily. It depends on a divalent metal cation as a cofactor.

Accelerates the degradation of transcripts by removing pyrophosphate from the 5'-end of triphosphorylated RNA, leading to a more labile monophosphorylated state that can stimulate subsequent ribonuclease cleavage. The protein is RNA pyrophosphohydrolase of Novosphingobium aromaticivorans (strain ATCC 700278 / DSM 12444 / CCUG 56034 / CIP 105152 / NBRC 16084 / F199).